The primary structure comprises 132 residues: Small ribosomal subunit protein uS8c (132 aa).

It belongs to the universal ribosomal protein uS8 family. In terms of assembly, part of the 30S ribosomal subunit.

It is found in the plastid. Its subcellular location is the chloroplast. Its function is as follows. One of the primary rRNA binding proteins, it binds directly to 16S rRNA central domain where it helps coordinate assembly of the platform of the 30S subunit. The sequence is that of Small ribosomal subunit protein uS8c (rps8) from Huperzia lucidula (Shining clubmoss).